We begin with the raw amino-acid sequence, 251 residues long: Triosephosphate isomerase (251 aa).

Position 9–11 (Asn-9–Lys-11) interacts with substrate. The active-site Electrophile is His-95. The active-site Proton acceptor is the Glu-167. Residues Gly-173, Ser-213, and Gly-234–Gly-235 contribute to the substrate site. Ser-213 bears the Phosphoserine mark.

The protein belongs to the triosephosphate isomerase family. As to quaternary structure, homodimer.

It is found in the cytoplasm. It carries out the reaction D-glyceraldehyde 3-phosphate = dihydroxyacetone phosphate. It participates in carbohydrate biosynthesis; gluconeogenesis. Its pathway is carbohydrate degradation; glycolysis; D-glyceraldehyde 3-phosphate from glycerone phosphate: step 1/1. In terms of biological role, involved in the gluconeogenesis. Catalyzes stereospecifically the conversion of dihydroxyacetone phosphate (DHAP) to D-glyceraldehyde-3-phosphate (G3P). The polypeptide is Triosephosphate isomerase (Bacillus cereus (strain ATCC 10987 / NRS 248)).